Reading from the N-terminus, the 721-residue chain is Ribonucleoside-diphosphate reductase subunit alpha (721 aa).

Substrate is bound by residues Thr-159, 175–176 (SC), Gly-204, 384–388 (NLCSE), and 589–593 (PTGSI). A disulfide bridge links Cys-176 with Cys-413. Asn-384 acts as the Proton acceptor in catalysis. The active-site Cysteine radical intermediate is the Cys-386. Glu-388 serves as the catalytic Proton acceptor.

Belongs to the ribonucleoside diphosphate reductase large chain family. As to quaternary structure, tetramer of two alpha and two beta subunits.

It carries out the reaction a 2'-deoxyribonucleoside 5'-diphosphate + [thioredoxin]-disulfide + H2O = a ribonucleoside 5'-diphosphate + [thioredoxin]-dithiol. With respect to regulation, under complex allosteric control mediated by deoxynucleoside triphosphates and ATP binding. The type of nucleotide bound at the specificity site determines substrate preference. It seems probable that ATP makes the enzyme reduce CDP and UDP, dGTP favors ADP reduction and dTTP favors GDP reduction. In terms of biological role, provides the precursors necessary for DNA synthesis. Catalyzes the biosynthesis of deoxyribonucleotides from the corresponding ribonucleotides. In Mycoplasma pneumoniae (strain ATCC 29342 / M129 / Subtype 1) (Mycoplasmoides pneumoniae), this protein is Ribonucleoside-diphosphate reductase subunit alpha (nrdE).